Reading from the N-terminus, the 283-residue chain is Thymidylate synthase (283 aa).

Arg22 serves as a coordination point for dUMP. Cys160 serves as the catalytic Nucleophile. Residues 180–183 (RSCD), Asn191, and 221–223 (HIY) each bind dUMP. Asp183 provides a ligand contact to (6R)-5,10-methylene-5,6,7,8-tetrahydrofolate. Ala282 is a (6R)-5,10-methylene-5,6,7,8-tetrahydrofolate binding site.

This sequence belongs to the thymidylate synthase family. Bacterial-type ThyA subfamily. In terms of assembly, homodimer.

It localises to the cytoplasm. The enzyme catalyses dUMP + (6R)-5,10-methylene-5,6,7,8-tetrahydrofolate = 7,8-dihydrofolate + dTMP. It functions in the pathway pyrimidine metabolism; dTTP biosynthesis. Its function is as follows. Catalyzes the reductive methylation of 2'-deoxyuridine-5'-monophosphate (dUMP) to 2'-deoxythymidine-5'-monophosphate (dTMP) while utilizing 5,10-methylenetetrahydrofolate (mTHF) as the methyl donor and reductant in the reaction, yielding dihydrofolate (DHF) as a by-product. This enzymatic reaction provides an intracellular de novo source of dTMP, an essential precursor for DNA biosynthesis. This Colwellia psychrerythraea (strain 34H / ATCC BAA-681) (Vibrio psychroerythus) protein is Thymidylate synthase.